The sequence spans 469 residues: DENN domain-containing protein 2D (469 aa).

The tract at residues 17–44 (LPRLRAGQSQNNPGEAVTEPERIQEHSP) is disordered. Residues 55–204 (EYLLVVSLKK…AFPAPGKTVT (150 aa)) enclose the uDENN domain. Residues 226 to 359 (HLEHVDFSVL…LQDDILDSLG (134 aa)) form the cDENN domain. The dDENN domain maps to 361 to 445 (GINELKTSEQ…QEAEKSRNPP (85 aa)).

It is found in the cytoplasm. Its function is as follows. Guanine nucleotide exchange factor (GEF) which may activate RAB9A and RAB9B. Promotes the exchange of GDP to GTP, converting inactive GDP-bound Rab proteins into their active GTP-bound form. The chain is DENN domain-containing protein 2D (Dennd2d) from Mus musculus (Mouse).